The primary structure comprises 381 residues: Diguanylate cyclase DosC (381 aa).

Position 98 (histidine 98) interacts with heme. The 57-residue stretch at 325-381 folds into the GGDEF domain; the sequence is TPLSVLIIDVDKFKEINDTWGHNTGDEILRKVSFLSQKRLVKSKILGAGSSRKLAVS. Residue aspartate 333 participates in Mg(2+) binding. The substrate site is built by asparagine 341 and aspartate 350.

Heme is required as a cofactor. The cofactor is Mg(2+).

The enzyme catalyses 2 GTP = 3',3'-c-di-GMP + 2 diphosphate. The protein operates within purine metabolism; 3',5'-cyclic di-GMP biosynthesis. Functionally, globin-coupled heme-based oxygen sensor protein displaying diguanylate cyclase (DGC) activity in response to oxygen availability. Thus, catalyzes the synthesis of cyclic diguanylate (c-di-GMP) via the condensation of 2 GTP molecules. Cyclic-di-GMP is a second messenger which controls cell surface-associated traits in bacteria. This Shigella flexneri serotype 5b (strain 8401) protein is Diguanylate cyclase DosC (dosC).